Here is a 313-residue protein sequence, read N- to C-terminus: MSGNLDVLQMKEEDVLKFLAAGTHLGGTNLDFQMDHYVYKRKSDGVYIINLKKTWEKLLLAARAIVAIENPADVCVISSRNTGQRAVLKFASATGATTFHGRFTPGTFTNQIQAAFREPRLLLVTDPRADHQPLTEASYVNIPTIALCNTDSPLRYVDIAIPCNNKGHHSVGLMWWMLAREVLRMRGTISREHPWDVMPDLYFYRDPEEIEKEEQAAAEKAVGKEEFQGEWSAPPAEFAQPEVADWSEGVAVPSVPIQQFAPATAAAAAAAAPPVKTGEVFSEDWSTQPATDDWSTAPTAQASDWGGTTSDWS.

Ser2 bears the N-acetylserine mark. 2 laminin-binding regions span residues 161–180 (IPCNNKGHHSVGLMWWMLAR) and 205–229 (RDPEEIEKEEQAAAEKAVGKEEFQG). 2 [DE]-W-[ST] repeats span residues 230–232 (EWS) and 245–247 (DWS). Residues 242-313 (EVADWSEGVA…DWGGTTSDWS (72 aa)) are laminin-binding. Residues 262–274 (PATAAAAAAAAPP) are compositionally biased toward low complexity. The disordered stretch occupies residues 262 to 313 (PATAAAAAAAAPPVKTGEVFSEDWSTQPATDDWSTAPTAQASDWGGTTSDWS). [DE]-W-[ST] repeat units follow at residues 284 to 286 (DWS), 293 to 295 (DWS), and 311 to 313 (DWS). A compositionally biased stretch (polar residues) spans 284–313 (DWSTQPATDDWSTAPTAQASDWGGTTSDWS).

Belongs to the universal ribosomal protein uS2 family. As to quaternary structure, monomer (37LRP) and homodimer (67LR). Component of the small ribosomal subunit. Mature ribosomes consist of a small (40S) and a large (60S) subunit. The 40S subunit contains about 33 different proteins and 1 molecule of RNA (18S). The 60S subunit contains about 49 different proteins and 3 molecules of RNA (28S, 5.8S and 5S). Interacts with rps21. Interacts with several laminins including at least lamb1. Interacts with mdk. Acylated. Acylation may be a prerequisite for conversion of the monomeric 37 kDa laminin receptor precursor (37LRP) to the mature dimeric 67 kDa laminin receptor (67LR), and may provide a mechanism for membrane association. In terms of processing, cleaved by stromelysin-3 (ST3) at the cell surface. Cleavage by stromelysin-3 may be a mechanism to alter cell-extracellular matrix interactions.

The protein localises to the cell membrane. The protein resides in the cytoplasm. Its subcellular location is the nucleus. Required for the assembly and/or stability of the 40S ribosomal subunit. Required for the processing of the 20S rRNA-precursor to mature 18S rRNA in a late step of the maturation of 40S ribosomal subunits. Also functions as a cell surface receptor for laminin. Plays a role in cell adhesion to the basement membrane and in the consequent activation of signaling transduction pathways. May play a role in cell fate determination and tissue morphogenesis. In Solea senegalensis (Senegalese sole), this protein is Small ribosomal subunit protein uS2 (rpsa).